Reading from the N-terminus, the 426-residue chain is Glutamate-1-semialdehyde 2,1-aminomutase (426 aa).

At Lys-265 the chain carries N6-(pyridoxal phosphate)lysine.

It belongs to the class-III pyridoxal-phosphate-dependent aminotransferase family. HemL subfamily. As to quaternary structure, homodimer. The cofactor is pyridoxal 5'-phosphate.

It localises to the cytoplasm. It carries out the reaction (S)-4-amino-5-oxopentanoate = 5-aminolevulinate. It functions in the pathway porphyrin-containing compound metabolism; protoporphyrin-IX biosynthesis; 5-aminolevulinate from L-glutamyl-tRNA(Glu): step 2/2. This Escherichia coli O139:H28 (strain E24377A / ETEC) protein is Glutamate-1-semialdehyde 2,1-aminomutase.